Reading from the N-terminus, the 277-residue chain is Anamorsin homolog 2 (277 aa).

The segment at 1–141 (MDTQPIVLVI…RKPAWDTGSS (141 aa)) is N-terminal SAM-like domain. Positions 141 to 186 (SFKLKKKVAQKPANVVTFDIPAFKVQLGDDLDDLIDEDSLLTEEDL) are linker. Residues C197, C207, C210, and C212 each contribute to the [2Fe-2S] cluster site. The tract at residues 197–212 (CEVGKAGRKACKNCTC) is fe-S binding site A. [4Fe-4S] cluster contacts are provided by C238, C241, C249, and C252. Short sequence motifs (cx2C motif) lie at residues 238-241 (CGSC) and 249-252 (CSTC). The fe-S binding site B stretch occupies residues 238–252 (CGSCGLGDAFRCSTC).

This sequence belongs to the anamorsin family. As to quaternary structure, monomer. [2Fe-2S] cluster is required as a cofactor. Requires [4Fe-4S] cluster as cofactor.

Its subcellular location is the cytoplasm. It is found in the mitochondrion intermembrane space. Component of the cytosolic iron-sulfur (Fe-S) protein assembly (CIA) machinery. Required for the maturation of extramitochondrial Fe-S proteins. Part of an electron transfer chain functioning in an early step of cytosolic Fe-S biogenesis, facilitating the de novo assembly of a [4Fe-4S] cluster on the cytosolic Fe-S scaffold complex. Electrons are transferred from NADPH via a FAD- and FMN-containing diflavin oxidoreductase. Together with the diflavin oxidoreductase, also required for the assembly of the diferric tyrosyl radical cofactor of ribonucleotide reductase (RNR), probably by providing electrons for reduction during radical cofactor maturation in the catalytic small subunit. The chain is Anamorsin homolog 2 from Picea sitchensis (Sitka spruce).